The following is a 151-amino-acid chain: uncharacterized protein (151 aa).

This is an uncharacterized protein from Rhizobium meliloti (strain 1021) (Ensifer meliloti).